A 374-amino-acid chain; its full sequence is Chaperone protein DnaJ (374 aa).

Positions 5-70 constitute a J domain; sequence DYYEVLGVAK…QKRAAYDRYG (66 aa). A CR-type zinc finger spans residues 134–212; that stretch reads GFDTEIRVPS…CDGVGRIRRN (79 aa). Positions 147, 150, 164, 167, 186, 189, 200, and 203 each coordinate Zn(2+). CXXCXGXG motif repeat units follow at residues 147 to 154, 164 to 171, 186 to 193, and 200 to 207; these read CDTCHGSG, CRTCGGSG, CPTCHGTG, and CPSCDGVG.

This sequence belongs to the DnaJ family. Homodimer. Requires Zn(2+) as cofactor.

It localises to the cytoplasm. Its function is as follows. Participates actively in the response to hyperosmotic and heat shock by preventing the aggregation of stress-denatured proteins and by disaggregating proteins, also in an autonomous, DnaK-independent fashion. Unfolded proteins bind initially to DnaJ; upon interaction with the DnaJ-bound protein, DnaK hydrolyzes its bound ATP, resulting in the formation of a stable complex. GrpE releases ADP from DnaK; ATP binding to DnaK triggers the release of the substrate protein, thus completing the reaction cycle. Several rounds of ATP-dependent interactions between DnaJ, DnaK and GrpE are required for fully efficient folding. Also involved, together with DnaK and GrpE, in the DNA replication of plasmids through activation of initiation proteins. The sequence is that of Chaperone protein DnaJ from Bordetella petrii (strain ATCC BAA-461 / DSM 12804 / CCUG 43448).